Here is a 468-residue protein sequence, read N- to C-terminus: Neuronal acetylcholine receptor subunit alpha-5 (468 aa).

The first 22 residues, 1-22, serve as a signal peptide directing secretion; the sequence is MAARGSGPRALRLLLLVQLVAG. Residues 23 to 254 lie on the Extracellular side of the membrane; it reads RCGLAGAAGG…VIKRLPLFYT (232 aa). 3 N-linked (GlcNAc...) asparagine glycosylation sites follow: N155, N183, and N229. C170 and C184 are disulfide-bonded. An intrachain disulfide couples C234 to C235. 3 helical membrane passes run 255 to 275, 282 to 302, and 317 to 337; these read LFLIIPCIGLSFLTVLVFYLP, ICLCTSVLVSLTVFLLVIEEI, and LVFTMIFVTLSIMVTVFAINI. Over 338–429 the chain is Cytoplasmic; it reads HHRSSSTHNA…WKFIAQVLDR (92 aa). A helical transmembrane segment spans residues 430–451; it reads MFLWTFLFVSIVGSLGLFVPVI. Residues 452–468 are Extracellular-facing; that stretch reads YKWANILIPVHIGNANK.

It belongs to the ligand-gated ion channel (TC 1.A.9) family. Acetylcholine receptor (TC 1.A.9.1) subfamily. Alpha-5/CHRNA5 sub-subfamily. Neuronal AChR that forms heteropentamers composed of two different type of subunits: alpha and non-alpha (beta). CHRNA5/alpha-5 subunit is only able to form functional nAChRs when co-assembled with another alpha subunit, can be combined to CHRNA4/alpha-4 or CHRNA3/alpha-3 and CHRNB4/beta-4 or CHRNB2/beta-2 to give rise to functional receptors. Interacts with LYPD6.

The protein resides in the synaptic cell membrane. It localises to the cell membrane. The enzyme catalyses Ca(2+)(in) = Ca(2+)(out). The catalysed reaction is K(+)(in) = K(+)(out). It carries out the reaction Na(+)(in) = Na(+)(out). Its activity is regulated as follows. Activated by a myriad of ligands such as acetylcholine, cytisine, nicotine, choline and epibatidine. Component of neuronal acetylcholine receptors (nAChRs) that function as pentameric, ligand-gated cation channels with high calcium permeability among other activities. nAChRs are excitatory neurotrasnmitter receptors formed by a collection of nAChR subunits known to mediate synaptic transmission in the nervous system and the neuromuscular junction. Each nAchR subunit confers differential attributes to channel properties, including activation, deactivation and desensitization kinetics, pH sensitivity, cation permeability, and binding to allosteric modulators. Has an accessory rather than functional role and is only able to form functional nAChRs when co-assembled with another beta subunit. Participates in pentameric assemblies along with CHRNA3, CHRNA4, CHRNB2 and CHRNB4. Increases receptor sensitivity to acetylcholine and nicotine when associated with CHRNA4 and CHRNB2. Plays a role in nicotine addiction. The sequence is that of Neuronal acetylcholine receptor subunit alpha-5 from Homo sapiens (Human).